A 363-amino-acid polypeptide reads, in one-letter code: 3-dehydroquinate synthase (363 aa).

NAD(+)-binding positions include 107-111 (GVIGD), 131-132 (TT), K144, and K153. Residues E186, H251, and H268 each coordinate Zn(2+).

It belongs to the sugar phosphate cyclases superfamily. Dehydroquinate synthase family. NAD(+) serves as cofactor. The cofactor is Co(2+). Requires Zn(2+) as cofactor.

The protein localises to the cytoplasm. It catalyses the reaction 7-phospho-2-dehydro-3-deoxy-D-arabino-heptonate = 3-dehydroquinate + phosphate. The protein operates within metabolic intermediate biosynthesis; chorismate biosynthesis; chorismate from D-erythrose 4-phosphate and phosphoenolpyruvate: step 2/7. Its function is as follows. Catalyzes the conversion of 3-deoxy-D-arabino-heptulosonate 7-phosphate (DAHP) to dehydroquinate (DHQ). The chain is 3-dehydroquinate synthase from Nostoc sp. (strain PCC 7120 / SAG 25.82 / UTEX 2576).